Reading from the N-terminus, the 809-residue chain is Leucine--tRNA ligase (809 aa).

Positions 40–50 (PYPSGRIHMGH) match the 'HIGH' region motif. Positions 579–583 (KMSKS) match the 'KMSKS' region motif. Residue K582 participates in ATP binding.

Belongs to the class-I aminoacyl-tRNA synthetase family.

The protein resides in the cytoplasm. The catalysed reaction is tRNA(Leu) + L-leucine + ATP = L-leucyl-tRNA(Leu) + AMP + diphosphate. The chain is Leucine--tRNA ligase from Campylobacter jejuni subsp. doylei (strain ATCC BAA-1458 / RM4099 / 269.97).